A 771-amino-acid chain; its full sequence is MGLPPLEFSDCYLDSPQFRERLKSHETELDKTNKFIKELIKDGKSLVAAHKSLSFAKRKFAGSLNEFKFRCIGDAETDDEICIARSLQEFAAVLGNLEDERIRMIDNAGEVLITPLEKFRKEQISAAKEVKKKYDKETEKYCGMLEKHMNLSSKKKEVLLHEADVQLDQMRQHFYEVSLEYVLKVHEVQERKMFEFVEPLLAFLQGLFTFYHHGYELAKDFSDFKTQLSISIQNTRDRFEGTRSEVESLMKKMKENPHEHLALSPFTMEGYLYVQEKRHFGTSWVKHYCTYQRETKQMTMVPFDQKSGGKVGEEELVQLKSCIRRKTESIEKRFCFDVEGVDRPTVLTMQALSEEDRKLWMEAMDGREPVYNSNKDSQSEGTAQLDNIGFSIIRKCIQAIETRGINEQGLYRIVGVNSRVQKLLNILMDPKISPETETEIPSEWEIKTITSSLKTYLRMLPGPLMTYQFQRSFIKAAKQESQESRIKEIHCLIHRLPEKNRQMLHLLMTHLANVAAHHKQNLMTVANLGVVFGPTLLRPQEETVAAIMDIKFQNIVVEIIIENYEEMFSTVPEMPQTNSQLHLSRKRSTDSKPPSCSERPLTLFHTSHSSEKEEKRNSVNSSAESVSSSNANSSVNSTCTQRSNMNNLNASDPDLDVAKVSRPNSLLNPKNISGLLPSSLNPSPTSPPTCPMVSAPSSPMPTSSTSSDSSPVSVPRKAKALYACKAEHDSELSFSAGTVFENVCPSQEPGWLEGTLNGKTGLIPENYVEFL.

One can recognise a BAR domain in the interval glutamate 7–alanine 262. Residues proline 265–proline 369 form the PH domain. The Rho-GAP domain maps to alanine 383 to phenylalanine 568. The segment at proline 575–valine 712 is disordered. Positions histidine 608–asparagine 617 are enriched in basic and acidic residues. Residues serine 618 to serine 637 show a composition bias toward low complexity. Polar residues-rich tracts occupy residues threonine 638–alanine 650 and arginine 662–asparagine 671. 2 stretches are compositionally biased toward low complexity: residues serine 673–serine 683 and proline 691–valine 712. Residues serine 713 to leucine 771 form the SH3 domain.

It localises to the cell junction. It is found in the focal adhesion. Its subcellular location is the cytoplasm. The protein resides in the cytoskeleton. The protein localises to the endosome membrane. Functionally, GTPase-activating protein for rhoa and cdc42. May be involved in the regulation of neosynthesized protein export through a Rab-endososomal dependent export route. This is Rho GTPase-activating protein 26 (arhgap26) from Xenopus laevis (African clawed frog).